Here is a 327-residue protein sequence, read N- to C-terminus: Thiamine thiazole synthase (327 aa).

Residues C86, 107-108, G115, and V182 contribute to the substrate site; that span reads EA. C216 carries the 2,3-didehydroalanine (Cys) modification. Substrate contacts are provided by residues D218, H233, M285, and 295-297; that span reads RMG.

Belongs to the THI4 family. Homooctamer. It depends on Fe cation as a cofactor. During the catalytic reaction, a sulfide is transferred from Cys-216 to a reaction intermediate, generating a dehydroalanine residue.

The protein localises to the cytoplasm. It localises to the nucleus. It catalyses the reaction [ADP-thiazole synthase]-L-cysteine + glycine + NAD(+) = [ADP-thiazole synthase]-dehydroalanine + ADP-5-ethyl-4-methylthiazole-2-carboxylate + nicotinamide + 3 H2O + 2 H(+). In terms of biological role, involved in biosynthesis of the thiamine precursor thiazole. Catalyzes the conversion of NAD and glycine to adenosine diphosphate 5-(2-hydroxyethyl)-4-methylthiazole-2-carboxylic acid (ADT), an adenylated thiazole intermediate. The reaction includes an iron-dependent sulfide transfer from a conserved cysteine residue of the protein to a thiazole intermediate. The enzyme can only undergo a single turnover, which suggests it is a suicide enzyme. May have additional roles in adaptation to various stress conditions and in DNA damage tolerance. In Aspergillus oryzae (strain ATCC 42149 / RIB 40) (Yellow koji mold), this protein is Thiamine thiazole synthase.